We begin with the raw amino-acid sequence, 345 residues long: L-threonine 3-dehydrogenase (345 aa).

Residue Cys-39 participates in Zn(2+) binding. Active-site charge relay system residues include Thr-41 and His-44. His-64, Glu-65, Cys-94, Cys-97, Cys-100, and Cys-108 together coordinate Zn(2+). NAD(+)-binding positions include Ile-176, Asp-196, Arg-201, Leu-263–Ile-265, and Val-287–Tyr-288.

It belongs to the zinc-containing alcohol dehydrogenase family. As to quaternary structure, homotetramer. Zn(2+) is required as a cofactor.

Its subcellular location is the cytoplasm. The catalysed reaction is L-threonine + NAD(+) = (2S)-2-amino-3-oxobutanoate + NADH + H(+). The protein operates within amino-acid degradation; L-threonine degradation via oxydo-reductase pathway; glycine from L-threonine: step 1/2. Functionally, catalyzes the NAD(+)-dependent oxidation of L-threonine to 2-amino-3-ketobutyrate. This Anaeromyxobacter dehalogenans (strain 2CP-1 / ATCC BAA-258) protein is L-threonine 3-dehydrogenase.